Consider the following 273-residue polypeptide: Probable nicotinate-nucleotide pyrophosphorylase [carboxylating] (273 aa).

Residues Arg91, 124 to 126, Arg148, Lys158, Glu188, Asp209, 235 to 237, and 256 to 258 contribute to the substrate site; these read TRK, SGN, and VGA.

It belongs to the NadC/ModD family. Hexamer formed by 3 homodimers.

It carries out the reaction nicotinate beta-D-ribonucleotide + CO2 + diphosphate = quinolinate + 5-phospho-alpha-D-ribose 1-diphosphate + 2 H(+). It functions in the pathway cofactor biosynthesis; NAD(+) biosynthesis; nicotinate D-ribonucleotide from quinolinate: step 1/1. Its function is as follows. Involved in the catabolism of quinolinic acid (QA). The sequence is that of Probable nicotinate-nucleotide pyrophosphorylase [carboxylating] (nadC) from Helicobacter pylori (strain J99 / ATCC 700824) (Campylobacter pylori J99).